The sequence spans 261 residues: Synaptophysin-like protein 1 (261 aa).

The Cytoplasmic segment spans residues 1 to 33 (MASKANMVRQRFSRLSQRMSAFQINLNPLKEPL). In terms of domain architecture, MARVEL spans 28 to 239 (PLKEPLGFIK…NAWFVYKETS (212 aa)). Residues 34 to 54 (GFIKILEWFASIFAFATCGGF) form a helical membrane-spanning segment. Residues 55–117 (KGKTEIQVNC…LIGDYSSSAQ (63 aa)) are Vesicular-facing. Asn-72 and Asn-95 each carry an N-linked (GlcNAc...) asparagine glycan. A helical transmembrane segment spans residues 118–138 (FYVTFAVFVFLYCIAALLLYV). The Cytoplasmic segment spans residues 139-151 (GYTNLYRDSRKLP). The helical transmembrane segment at 152-172 (MIDFIVTLVATFLWLVSSSAW) threads the bilayer. Residues 173-214 (AKALTDIKVATGHRIVEELEICNPESGVSCYFVSVTSMGSLN) are Vesicular-facing. An N-linked (GlcNAc...) asparagine glycan is attached at Asn-214. A helical transmembrane segment spans residues 215–235 (VSVIFGFLNMILWGGNAWFVY). Residues 236–261 (KETSLHSPSNTSASHSQGGGPPTSGM) are Cytoplasmic-facing. Over residues 241-251 (HSPSNTSASHS) the composition is skewed to polar residues. Residues 241–261 (HSPSNTSASHSQGGGPPTSGM) are disordered. Gly residues predominate over residues 252–261 (QGGGPPTSGM).

It belongs to the synaptophysin/synaptobrevin family. In terms of tissue distribution, ubiquitously expressed.

The protein localises to the cytoplasmic vesicle membrane. The protein resides in the melanosome. The polypeptide is Synaptophysin-like protein 1 (Sypl1) (Mus musculus (Mouse)).